Here is a 138-residue protein sequence, read N- to C-terminus: Large ribosomal subunit protein uL16 (138 aa).

Positions 1-17 (MLQPKRTKFRKQHKGRN) are enriched in basic residues. The disordered stretch occupies residues 1–22 (MLQPKRTKFRKQHKGRNRGVAT).

The protein belongs to the universal ribosomal protein uL16 family. As to quaternary structure, part of the 50S ribosomal subunit.

In terms of biological role, binds 23S rRNA and is also seen to make contacts with the A and possibly P site tRNAs. The polypeptide is Large ribosomal subunit protein uL16 (Acidithiobacillus ferrooxidans (strain ATCC 23270 / DSM 14882 / CIP 104768 / NCIMB 8455) (Ferrobacillus ferrooxidans (strain ATCC 23270))).